The chain runs to 426 residues: ORC1-type DNA replication protein 1 (426 aa).

ATP is bound by residues 62–66 (VGKTL), tyrosine 211, and arginine 223.

The protein belongs to the CDC6/cdc18 family.

Its function is as follows. Involved in regulation of DNA replication. The sequence is that of ORC1-type DNA replication protein 1 (cdc6a) from Haloarcula marismortui (strain ATCC 43049 / DSM 3752 / JCM 8966 / VKM B-1809) (Halobacterium marismortui).